The sequence spans 289 residues: MADKHKHVDEVSGVETTGHEWDGIRELNNPMPRWWVYSFYATIIWAIGYAIAYPSWPMLTEATKGMLGYSSRAEVSVELAAAKAAQAGNLEQIASSSVEEIIANPQLQQFAVSAGASAFKVNCAQCHGSGAAGGQGFPNLNDDDWLWGGKPQEIYQTIAHGVRHAPDGETRVSEMPPFGDMLTPELMQQTAAYVVSLTQAPSQPHLVQQGKQVFADNCASCHGADAKGNREMGAPNLADAIWLKGEGEQAVITQMKTPKHGVMPAWLPRLGDDTVKQLAVFVHSLGGGE.

At 1 to 33 (MADKHKHVDEVSGVETTGHEWDGIRELNNPMPR) the chain is on the cytoplasmic side. The helical transmembrane segment at 34 to 56 (WWVYSFYATIIWAIGYAIAYPSW) threads the bilayer. Residues 57-289 (PMLTEATKGM…VFVHSLGGGE (233 aa)) lie on the Periplasmic side of the membrane. 2 consecutive Cytochrome c domains span residues 110–198 (FAVS…VSLT) and 205–286 (HLVQ…HSLG). Cysteine 123, cysteine 126, histidine 127, methionine 175, cysteine 218, cysteine 221, histidine 222, and methionine 263 together coordinate heme c.

It belongs to the CcoP / FixP family. Component of the cbb3-type cytochrome c oxidase at least composed of FixN, FixO, FixQ and FixP. The cofactor is heme c.

It localises to the cell inner membrane. It functions in the pathway energy metabolism; oxidative phosphorylation. In terms of biological role, C-type cytochrome. Part of the cbb3-type cytochrome c oxidase complex. FixP subunit is required for transferring electrons from donor cytochrome c via its heme groups to FixO subunit. From there, electrons are shuttled to the catalytic binuclear center of FixN subunit where oxygen reduction takes place. The complex also functions as a proton pump. The sequence is that of Cbb3-type cytochrome c oxidase subunit FixP from Rhizobium meliloti (strain 1021) (Ensifer meliloti).